Reading from the N-terminus, the 546-residue chain is Probable protein kinase UbiB (546 aa).

The Protein kinase domain occupies 123–501 (DFDETPLASA…SRRQGQARYL (379 aa)). Residues 129-137 (LASASIAQV) and Lys152 contribute to the ATP site. Asp287 functions as the Proton acceptor in the catalytic mechanism. 2 consecutive transmembrane segments (helical) span residues 496–516 (GQAR…VFLL) and 521–541 (HIEW…LGWF).

This sequence belongs to the ABC1 family. UbiB subfamily.

It is found in the cell inner membrane. The protein operates within cofactor biosynthesis; ubiquinone biosynthesis [regulation]. In terms of biological role, is probably a protein kinase regulator of UbiI activity which is involved in aerobic coenzyme Q (ubiquinone) biosynthesis. The polypeptide is Probable protein kinase UbiB (Aeromonas salmonicida (strain A449)).